Consider the following 600-residue polypeptide: UPF0588 membrane protein C20F10.02c (600 aa).

2 helical membrane passes run 409 to 429 (LSAT…TSLV) and 437 to 457 (YHWL…SVLI).

Belongs to the UPF0588 family.

The protein localises to the membrane. This Schizosaccharomyces pombe (strain 972 / ATCC 24843) (Fission yeast) protein is UPF0588 membrane protein C20F10.02c.